An 84-amino-acid chain; its full sequence is Large ribosomal subunit protein bL27 (84 aa).

Residues 1-27 (MAHKKGQGASRNGRDSKSKRLGVKVGA) are disordered.

This sequence belongs to the bacterial ribosomal protein bL27 family.

The polypeptide is Large ribosomal subunit protein bL27 (Chlamydia pneumoniae (Chlamydophila pneumoniae)).